We begin with the raw amino-acid sequence, 253 residues long: Toxin PezT (253 aa).

Gly39 to Thr46 contributes to the ATP binding site. Asp66 functions as the Proton acceptor in the catalytic mechanism.

The protein belongs to the zeta toxin family. As to quaternary structure, forms a PezA(2)PezT(2) heterotetramer. The heterotetramer is much more stable than either of the proteins alone, and a specific mechanism may be necessary to liberate the toxin.

It carries out the reaction UDP-N-acetyl-alpha-D-glucosamine + ATP = UDP-N-acetyl-alpha-D-glucosamine 3'-phosphate + ADP + H(+). Toxic component of a type II toxin-antitoxin (TA) system. Phosphorylates UDP-N-acetyl-D-glucosamine (UNAG) on the 3'-hydroxyl group of the N-acetyl-D-glucosamine moiety, yielding UNAG-3P. UNAG-3P inhibits MurA, the first committed step in cell wall synthesis, which is then blocked. Upon expression in E.coli results in decreased cell growth and viability, followed 3 hours later by growth restoration; the toxic effect and phosphorylation of UNAG are neutralized by coexpression with cognate antitoxin PezA. A mutant lacking the last 11 residues is stably maintained in E.coli, unlike the wild-type which undergoes spontaneous mutation. Expression of the deletion mutant in rapidly growing liquid cultures leads to cell bulging, permeabilization and massive lysis by 1 hour. Cells that survive are not able to undergo cytokinesis. Expression in slowly growing cells leads to bulging but not lysis. In terms of biological role, acts as a corepressor of its own operon with PezA; it is not clear if it binds DNA alone. This chain is Toxin PezT (pezT), found in Streptococcus pneumoniae serotype 4 (strain ATCC BAA-334 / TIGR4).